The primary structure comprises 201 residues: NAD(P)H-dependent FMN reductase ntnL (201 aa).

FMN-binding positions include arginine 12, 90–93, and tyrosine 120; that span reads EYNG.

As to quaternary structure, homodimer.

The enzyme catalyses FMNH2 + NADP(+) = FMN + NADPH + 2 H(+). The catalysed reaction is FMNH2 + NAD(+) = FMN + NADH + 2 H(+). It participates in secondary metabolite biosynthesis; terpenoid biosynthesis. Its function is as follows. NAD(P)H-dependent FMN reductase; part of the gene cluster that mediates the biosynthesis of the meroterpenoids nectripenoids A and B, as well as cochliquninone D and isocochliquninone E. The pathway probably begins with the HR-PKS ntnH that catalyzes two chain-extension steps to form a reduced triketide, which then primes the SAT domain in the NR-PKS ntnG to initiate three more cycles of extension to give a linear hexaketide corresponding to the polyketide part of nectripenoids. The FAD-dependent monooxygenase ntnJ then performs an oxidative decarboxylation at C11 of the ntnH/ntnG product, via an electrophilic aromatic hydroxylation with concomitant ipso-decarboxylation. The membrane-bound polyprenyl transferase ntnF then introduces a farnesyl group before the FAD-dependent monooxygenase ntnK functions as the first epoxidase on terminal C12'-C13' olefin, followed by a second epoxidation on C7'-C8' catalyzed by ntnA. The terpene cyclase/mutase ntnI then initiates the sequential tricyclic ring formation through protonation of the terminal epoxide and catalyzes the regioselective and stereoselective 6/6/6-tricyclic ring formation. The cytochrome P450 monooxygenase ntnM may then hydroxylate C1'. This chain is NAD(P)H-dependent FMN reductase ntnL, found in Nectria sp.